Here is a 692-residue protein sequence, read N- to C-terminus: SH3 domain-containing protein 21 (692 aa).

The disordered stretch occupies residues 1 to 60 (MVQSELQLQPRAGGRAEAASWGDRGNDKGGFGNPDMPSVSPGPQRPPKLSSLAYDSPPDY). The SH3 domain maps to 65–126 (SHPEAYRVLF…PDNFVLPPPP (62 aa)). Disordered stretches follow at residues 132 to 501 (PRKV…EVLP), 536 to 605 (PKGG…SQET), and 672 to 692 (VMQG…TQTY). Over residues 177–186 (PSRDSQKLTS) the composition is skewed to basic and acidic residues. Positions 210–220 (TQTPQQRSVSS) are enriched in polar residues. Basic and acidic residues-rich tracts occupy residues 378–396 (VSTR…EALQ), 490–501 (NEERLLRGEVLP), and 542–582 (SKEE…KEEV). A coiled-coil region spans residues 628–678 (SLRGEVESLRRALELMGVQLERKLTDIWEELKSEKEQRQRLEVQVMQGTQK). Residues 673–692 (MQGTQKSQTPRIIHAQTQTY) show a composition bias toward polar residues.

The chain is SH3 domain-containing protein 21 (SH3D21) from Macaca fascicularis (Crab-eating macaque).